The primary structure comprises 503 residues: Probable cytosol aminopeptidase (503 aa).

Mn(2+)-binding residues include Lys274 and Asp279. Lys286 is an active-site residue. Mn(2+) is bound by residues Asp297, Asp356, and Glu358. Arg360 is a catalytic residue.

The protein belongs to the peptidase M17 family. Mn(2+) serves as cofactor.

The protein resides in the cytoplasm. The enzyme catalyses Release of an N-terminal amino acid, Xaa-|-Yaa-, in which Xaa is preferably Leu, but may be other amino acids including Pro although not Arg or Lys, and Yaa may be Pro. Amino acid amides and methyl esters are also readily hydrolyzed, but rates on arylamides are exceedingly low.. It catalyses the reaction Release of an N-terminal amino acid, preferentially leucine, but not glutamic or aspartic acids.. Its function is as follows. Presumably involved in the processing and regular turnover of intracellular proteins. Catalyzes the removal of unsubstituted N-terminal amino acids from various peptides. The chain is Probable cytosol aminopeptidase from Burkholderia mallei (strain SAVP1).